Here is a 462-residue protein sequence, read N- to C-terminus: MLEKKATRSTRVDGVSGEAVIEEFERVTRDAANVQRETLRRILAENGGVEYLRGLGLAGATDPATFRARVPLATHADLEPYIDRIADGDASPVLTAKPATSISLSSGTTQGKRKYLLFNEELVKSTMQIYRISYAFRNREFPVENGKALQFIYSSRETRTKGGLTATTATTNVYRSEEFKATMRDIQSQCCSPDEVIFGPDFAQSLYCHLLAGLLAAGDVQIVSATFAHSVVLAFQTFERAWEDLCADIRRGEVSPSRVTSPAVRRAMAALLAAPNPGLADEVARKCAALSNWYGVIPALWPNARYVYGIMTGSMEHYVKKLRHYAGGLPLVAAEYGASEGWVGANVEPGTPPERATFTVLPDIAYFEFIPLKPVAGDGGYAEAEPVGLTEVAAGELYEVVMTTFAGNTRSSSSCMTLVAYYYLQSKKWMNICRFCISVHETSRNLVTCTFAATGHIMFAQK.

Position 103 (Ser103) interacts with ATP. Ser106 is a binding site for jasmonate. ATP-binding positions include Thr126, Asn172, and 337–342; that span reads GASEGW. 170–174 is a binding site for an L-alpha-amino acid; that stretch reads TTNVY. Residues 334–337 and Ser339 each bind jasmonate; that span reads AEYG.

This sequence belongs to the IAA-amido conjugating enzyme family. In terms of tissue distribution, expressed in green shoots and flowers.

It catalyses the reaction a jasmonate + an L-alpha-amino acid + ATP = a jasmonyl-L-amino acid + AMP + diphosphate + H(+). Functionally, catalyzes the synthesis of jasmonate-amino acid conjugates by adenylation. Catalyzes the conjugation of jasmonate (JA) to Ile when expressed in a heterologous system (E.coli). Catalyzes in vitro the conjugation of jasmonate (JA) to Ile, Phe, Leu, Met, Val and Trp. May catalyze the synthesis of indole-3-acetic acid (IAA)-amino acid conjugates, providing a mechanism for the plant to cope with the presence of excess auxin. This chain is Jasmonoyl--L-amino acid synthetase GH3.3, found in Oryza sativa subsp. japonica (Rice).